The chain runs to 497 residues: tRNA-2-methylthio-N(6)-dimethylallyladenosine synthase (497 aa).

The segment at 1 to 50 (MTGTSNIPTHGKEHKDAPALLPLPAPNPHHTHAAHPGNPSHDRPPSRGKL) is disordered. The MTTase N-terminal domain occupies 48–165 (GKLFIKTHGC…LPDMIRARRE (118 aa)). Cys57, Cys94, Cys128, Cys202, Cys206, and Cys209 together coordinate [4Fe-4S] cluster. In terms of domain architecture, Radical SAM core spans 188 to 430 (RAEGPSAFVS…QKHINTYAAD (243 aa)). The TRAM domain occupies 433-496 (KRMIGTVQTV…SNSLRGRVHT (64 aa)).

Belongs to the methylthiotransferase family. MiaB subfamily. Monomer. It depends on [4Fe-4S] cluster as a cofactor.

The protein resides in the cytoplasm. It carries out the reaction N(6)-dimethylallyladenosine(37) in tRNA + (sulfur carrier)-SH + AH2 + 2 S-adenosyl-L-methionine = 2-methylsulfanyl-N(6)-dimethylallyladenosine(37) in tRNA + (sulfur carrier)-H + 5'-deoxyadenosine + L-methionine + A + S-adenosyl-L-homocysteine + 2 H(+). In terms of biological role, catalyzes the methylthiolation of N6-(dimethylallyl)adenosine (i(6)A), leading to the formation of 2-methylthio-N6-(dimethylallyl)adenosine (ms(2)i(6)A) at position 37 in tRNAs that read codons beginning with uridine. In Xylella fastidiosa (strain 9a5c), this protein is tRNA-2-methylthio-N(6)-dimethylallyladenosine synthase.